The chain runs to 370 residues: Thiamine-repressible mitochondrial transport protein THI74 (370 aa).

Residues 1–10 (MNRVGIDVDH) lie on the Cytoplasmic side of the membrane. The helical transmembrane segment at 11–31 (MIGVLLLAVVVVFWVGASCLT) threads the bilayer. Over 32-42 (NELLETNAYNK) the chain is Mitochondrial intermembrane. A helical membrane pass occupies residues 43 to 63 (PFFLTYLNISSFALYLTPDLW). The Cytoplasmic segment spans residues 64-119 (RIIQSRRKSLQERTERTLPIHTQESFSEFLPLLSSTPSTSSNLSSIADTKVKDTMR). The chain crosses the membrane as a helical span at residues 120-140 (LSLLFCVLWFVANLAANAALS). The EamA domain maps to 129–190 (FVANLAANAA…SLFGIILIVM (62 aa)). Residues 141–146 (YTTVAS) lie on the Mitochondrial intermembrane side of the membrane. A helical membrane pass occupies residues 147-167 (STILSSTSSFFTLFLATSLGI). Over 168–169 (ET) the chain is Cytoplasmic. Residues 170–190 (FSTKKLLGLFVSLFGIILIVM) traverse the membrane as a helical segment. Residues 191 to 203 (QSSKQQDSVSASS) lie on the Mitochondrial intermembrane side of the membrane. The helical transmembrane segment at 204-224 (FLVGNTLALLGSLGYSVYTTL) threads the bilayer. Over 225-239 (LKYEISSKGLRLDIQ) the chain is Cytoplasmic. A helical membrane pass occupies residues 240-260 (MFLGYVGIFTFLLFWPILIIL). Residues 261-273 (DITHMETFELPSN) lie on the Mitochondrial intermembrane side of the membrane. Residues 274–294 (FHISFLVMLNCIIIFVSDYFW) form a helical membrane-spanning segment. Topologically, residues 295–303 (CKALILTSP) are cytoplasmic. Residues 304–324 (LVVTVALTFTIPLAMFADFVW) form a helical membrane-spanning segment. Residues 325-326 (RE) lie on the Mitochondrial intermembrane side of the membrane. A helical membrane pass occupies residues 327-347 (AFFTPWYIIGVIFIFVSFFLV). Over 348–370 (NHRGESAVEKDCAAVEKGPILDA) the chain is Cytoplasmic.

It localises to the mitochondrion membrane. May be involved in thiaminediphosphate transport across the mitochondrial membrane. The polypeptide is Thiamine-repressible mitochondrial transport protein THI74 (THI74) (Saccharomyces cerevisiae (strain ATCC 204508 / S288c) (Baker's yeast)).